Consider the following 129-residue polypeptide: Selenoprotein M (129 aa).

Positions 1–19 (MARGLAVFFLLAGACLALA) are cleaved as a signal peptide. Residues Cys35 and Sec38 each act as nucleophile in the active site. A non-standard amino acid (selenocysteine) is located at residue Sec38. The interval 107 to 129 (KSSKDEQVPEEYQEGPYMEKEEL) is disordered. Residues 126–129 (KEEL) carry the Prevents secretion from ER motif.

The protein belongs to the selenoprotein M/F family. As to expression, high expression levels observed in hepatopancreas, testis, ovaries and intestine. Also expressed in heart, stomach, gills, cranial ganglia, muscle and hematocytes.

It localises to the endoplasmic reticulum. In terms of biological role, may function as a thiol-disulfide oxidoreductase that participates in disulfide bond formation. Involved in the regulation of reproduction during the period of rapid gonadal development. The polypeptide is Selenoprotein M (Eriocheir sinensis (Chinese mitten crab)).